The sequence spans 199 residues: Large ribosomal subunit protein bL25 (199 aa).

Residues 1–21 form a disordered region; sequence MNIEKTLSVQKREGYGKGPSG.

The protein belongs to the bacterial ribosomal protein bL25 family. CTC subfamily. In terms of assembly, part of the 50S ribosomal subunit; part of the 5S rRNA/L5/L18/L25 subcomplex. Contacts the 5S rRNA. Binds to the 5S rRNA independently of L5 and L18.

This is one of the proteins that binds to the 5S RNA in the ribosome where it forms part of the central protuberance. This is Large ribosomal subunit protein bL25 from Desulfovibrio desulfuricans (strain ATCC 27774 / DSM 6949 / MB).